The following is a 249-amino-acid chain: Probable septum site-determining protein MinC (249 aa).

Residues 116 to 149 (AAVSPPPPPPPPPARAEPAAPVARPAPGRMQRNA) are disordered. Positions 119–130 (SPPPPPPPPPAR) are enriched in pro residues. The span at 131 to 142 (AEPAAPVARPAP) shows a compositional bias: low complexity.

It belongs to the MinC family. In terms of assembly, interacts with MinD and FtsZ.

Cell division inhibitor that blocks the formation of polar Z ring septums. Rapidly oscillates between the poles of the cell to destabilize FtsZ filaments that have formed before they mature into polar Z rings. Prevents FtsZ polymerization. The sequence is that of Probable septum site-determining protein MinC from Xanthomonas campestris pv. campestris (strain B100).